Reading from the N-terminus, the 726-residue chain is Catalase-peroxidase (726 aa).

Residues 1–33 form a disordered region; sequence MSTSDDIHNTTATGKCPFHQGGHDQSAGAGTTT. Positions 105–226 form a cross-link, tryptophyl-tyrosyl-methioninium (Trp-Tyr) (with M-252); the sequence is WHGAGTYRSI…LGATEMGLIY (122 aa). The active-site Proton acceptor is histidine 106. The segment at residues 226-252 is a cross-link (tryptophyl-tyrosyl-methioninium (Tyr-Met) (with W-105)); that stretch reads YVNPEGPDHSGEPLSAAAAIRATFGNM. Residue histidine 267 participates in heme b binding.

The protein belongs to the peroxidase family. Peroxidase/catalase subfamily. As to quaternary structure, homodimer or homotetramer. Heme b is required as a cofactor. Post-translationally, formation of the three residue Trp-Tyr-Met cross-link is important for the catalase, but not the peroxidase activity of the enzyme.

It carries out the reaction H2O2 + AH2 = A + 2 H2O. The enzyme catalyses 2 H2O2 = O2 + 2 H2O. In terms of biological role, bifunctional enzyme with both catalase and broad-spectrum peroxidase activity. In Shigella boydii serotype 4 (strain Sb227), this protein is Catalase-peroxidase.